An 82-amino-acid chain; its full sequence is MRIMARIGVENSLTDVQQALKQQGHEVVTLNSEQDAQGCDCCVVTGQDSNMMGIADASIKGSVITAHGLTTDDICQQVESRT.

It belongs to the UPF0180 family.

The chain is UPF0180 protein BALH_1248 from Bacillus thuringiensis (strain Al Hakam).